We begin with the raw amino-acid sequence, 207 residues long: Cytochrome c biogenesis ATP-binding export protein CcmA (207 aa).

In terms of domain architecture, ABC transporter spans 4-207; that stretch reads LEARELLCER…RISLTQTRAA (204 aa). 36–43 serves as a coordination point for ATP; it reads GSNGAGKT.

Belongs to the ABC transporter superfamily. CcmA exporter (TC 3.A.1.107) family. The complex is composed of two ATP-binding proteins (CcmA) and two transmembrane proteins (CcmB).

It localises to the cell inner membrane. It catalyses the reaction heme b(in) + ATP + H2O = heme b(out) + ADP + phosphate + H(+). Functionally, part of the ABC transporter complex CcmAB involved in the biogenesis of c-type cytochromes; once thought to export heme, this seems not to be the case, but its exact role is uncertain. Responsible for energy coupling to the transport system. The chain is Cytochrome c biogenesis ATP-binding export protein CcmA from Shigella flexneri.